The primary structure comprises 101 residues: Urease subunit beta (101 aa).

The protein belongs to the urease beta subunit family. As to quaternary structure, heterotrimer of UreA (gamma), UreB (beta) and UreC (alpha) subunits. Three heterotrimers associate to form the active enzyme.

Its subcellular location is the cytoplasm. It carries out the reaction urea + 2 H2O + H(+) = hydrogencarbonate + 2 NH4(+). It functions in the pathway nitrogen metabolism; urea degradation; CO(2) and NH(3) from urea (urease route): step 1/1. The sequence is that of Urease subunit beta from Granulibacter bethesdensis (strain ATCC BAA-1260 / CGDNIH1).